We begin with the raw amino-acid sequence, 475 residues long: Adenosylhomocysteinase (475 aa).

Residues T66, D141, and E201 each coordinate substrate. Residue 202 to 204 participates in NAD(+) binding; that stretch reads TTT. Positions 231 and 235 each coordinate substrate. Residues N236, 265–270, E288, N323, 344–346, and N389 contribute to the NAD(+) site; these read GYGEVG and IGH.

The protein belongs to the adenosylhomocysteinase family. The cofactor is NAD(+).

The protein resides in the cytoplasm. The enzyme catalyses S-adenosyl-L-homocysteine + H2O = L-homocysteine + adenosine. The protein operates within amino-acid biosynthesis; L-homocysteine biosynthesis; L-homocysteine from S-adenosyl-L-homocysteine: step 1/1. Functionally, may play a key role in the regulation of the intracellular concentration of adenosylhomocysteine. The sequence is that of Adenosylhomocysteinase from Geobacter sulfurreducens (strain ATCC 51573 / DSM 12127 / PCA).